The primary structure comprises 647 residues: Threonine--tRNA ligase (647 aa).

In terms of domain architecture, TGS spans 1–60; it reads MQVTIEDQSLEAAAGEACGQVLSRAVSGKRLKNAVACLVDGQPRDLAFPLPEDAHELALV. Positions 242-533 are catalytic; it reads DHRKLGAQLD…LIEHTAGALP (292 aa). Zn(2+) contacts are provided by cysteine 334, histidine 385, and histidine 510.

Belongs to the class-II aminoacyl-tRNA synthetase family. As to quaternary structure, homodimer. Zn(2+) is required as a cofactor.

The protein resides in the cytoplasm. The catalysed reaction is tRNA(Thr) + L-threonine + ATP = L-threonyl-tRNA(Thr) + AMP + diphosphate + H(+). Its function is as follows. Catalyzes the attachment of threonine to tRNA(Thr) in a two-step reaction: L-threonine is first activated by ATP to form Thr-AMP and then transferred to the acceptor end of tRNA(Thr). Also edits incorrectly charged L-seryl-tRNA(Thr). The chain is Threonine--tRNA ligase from Solidesulfovibrio magneticus (strain ATCC 700980 / DSM 13731 / RS-1) (Desulfovibrio magneticus).